The sequence spans 382 residues: Pyrimidine monooxygenase RutA (382 aa).

FMN is bound by residues 68 to 69, Asn-134, Glu-143, 159 to 160, and Ser-209; these read IK and RY.

The protein belongs to the NtaA/SnaA/DszA monooxygenase family. RutA subfamily.

It carries out the reaction uracil + FMNH2 + NADH + O2 = (Z)-3-ureidoacrylate + FMN + NAD(+) + H2O + H(+). The catalysed reaction is thymine + FMNH2 + NADH + O2 = (Z)-2-methylureidoacrylate + FMN + NAD(+) + H2O + H(+). Catalyzes the pyrimidine ring opening between N-3 and C-4 by an unusual flavin hydroperoxide-catalyzed mechanism, adding oxygen atoms in the process to yield ureidoacrylate peracid, that immediately reacts with FMN forming ureidoacrylate and FMN-N(5)-oxide. The FMN-N(5)-oxide reacts spontaneously with NADH to produce FMN. Requires the flavin reductase RutF to regenerate FMN in vivo. The polypeptide is Pyrimidine monooxygenase RutA (Escherichia coli (strain B / BL21-DE3)).